A 569-amino-acid polypeptide reads, in one-letter code: Urease subunit alpha (569 aa).

The region spanning 131 to 569 (GGVDAHIHFI…VAMAQRYFLF (439 aa)) is the Urease domain. Ni(2+) is bound by residues His136, His138, and Lys219. Position 219 is an N6-carboxylysine (Lys219). His221 contacts substrate. His248 and His274 together coordinate Ni(2+). Residue His322 is the Proton donor of the active site. Position 362 (Asp362) interacts with Ni(2+).

It belongs to the metallo-dependent hydrolases superfamily. Urease alpha subunit family. In terms of assembly, heterotrimer of UreA (gamma), UreB (beta) and UreC (alpha) subunits. Three heterotrimers associate to form the active enzyme. Ni cation is required as a cofactor. In terms of processing, carboxylation allows a single lysine to coordinate two nickel ions.

The protein localises to the cytoplasm. The catalysed reaction is urea + 2 H2O + H(+) = hydrogencarbonate + 2 NH4(+). It functions in the pathway nitrogen metabolism; urea degradation; CO(2) and NH(3) from urea (urease route): step 1/1. This Geobacillus kaustophilus (strain HTA426) protein is Urease subunit alpha.